The primary structure comprises 315 residues: MSDAPTVVAYLGPAGTFTEEALYKFADAGVFGDGEIEQLPAKSPQEAVDAVRHGTAQFAVVAIENFVDGPVTPTFDALDQGSNVQIIAEEELDIAFSIMVRPGTSLADVKTLATHPVGYQQVKNWMATTIPDAMYLSASSNGAGAQMVAEGTADAAAAPSRAAELFGLERLVDDVADVRGARTRFVAVQAQAAVSEPTGHDRTSVIFSLPNVPGSLVRALNEFAIRGVDLTRIESRPTRKVFGTYRFHLDISGHIRDIPVAEALRALHLQAEELVFVGSWPSNRAEDSTPQTDQLAKLHKADEWVRAASEGRKLN.

Positions 7–190 constitute a Prephenate dehydratase domain; it reads VVAYLGPAGT…ARTRFVAVQA (184 aa). In terms of domain architecture, ACT spans 204–283; it reads SVIFSLPNVP…LVFVGSWPSN (80 aa).

It carries out the reaction prephenate + H(+) = 3-phenylpyruvate + CO2 + H2O. Its pathway is amino-acid biosynthesis; L-phenylalanine biosynthesis; phenylpyruvate from prephenate: step 1/1. In Corynebacterium glutamicum (strain ATCC 13032 / DSM 20300 / JCM 1318 / BCRC 11384 / CCUG 27702 / LMG 3730 / NBRC 12168 / NCIMB 10025 / NRRL B-2784 / 534), this protein is Prephenate dehydratase (pheA).